Reading from the N-terminus, the 466-residue chain is Replication termination factor 1 (466 aa).

2 DNA-binding domain regions span residues 94–249 and 250–421; these read RDYT…LRRK and YNPF…KKTL. HTH myb-type domains are found at residues 251-304 and 305-363; these read NPFK…QPGE and INRS…SRDI. 2 DNA-binding regions (H-T-H motif) span residues 278–300 and 336–359; these read WSLIGKLSNRLPMHCRDHWRDYI and WSLISKNMRNRHRHHCRWKYYTLI.

It is found in the nucleus. In terms of biological role, mediates site-specific replication termination at the polar replication barrier RTS1, a barrier which ensures that replication of the mat1 locus in S.pombe occurs in the centromere-proximal direction. The polypeptide is Replication termination factor 1 (rtf1) (Schizosaccharomyces pombe (strain 972 / ATCC 24843) (Fission yeast)).